Consider the following 73-residue polypeptide: UPF0235 protein LA_1736 (73 aa).

The protein belongs to the UPF0235 family.

This Leptospira interrogans serogroup Icterohaemorrhagiae serovar Lai (strain 56601) protein is UPF0235 protein LA_1736.